A 2939-amino-acid polypeptide reads, in one-letter code: Serine/threonine-protein kinase tel1 (2939 aa).

3 disordered regions span residues 193-212 (GTSV…RAGS), 695-718 (PPED…AADS), and 859-886 (KTRR…ETRK). Over residues 697–715 (EDSHKATSTDQPKREEIRA) the composition is skewed to basic and acidic residues. An FAT domain is found at 1869 to 2471 (IAAAAATRCG…MYQIWSGVKA (603 aa)). Residues 2577 to 2890 (FEPQMSIASG…DKKSTKNLNE (314 aa)) form the PI3K/PI4K catalytic domain. The G-loop stretch occupies residues 2583–2589 (IASGVSA). The tract at residues 2755–2763 (GLGDRHGHN) is catalytic loop. Residues 2775 to 2799 (HIDLGVAFELGRILPVPELVPFRLT) form an activation loop region. Residues 2869-2894 (DVVEAEDERRAGDKKSTKNLNEPSEA) form a disordered region. Positions 2875–2884 (DERRAGDKKS) are enriched in basic and acidic residues. The region spanning 2907–2939 (KTLSVMATVNDLINQATDERNLAVLFCGWAAYA) is the FATC domain.

It belongs to the PI3/PI4-kinase family. ATM subfamily. In terms of assembly, associates with DNA double-strand breaks.

It localises to the nucleus. The protein resides in the chromosome. The protein localises to the telomere. The enzyme catalyses L-seryl-[protein] + ATP = O-phospho-L-seryl-[protein] + ADP + H(+). It carries out the reaction L-threonyl-[protein] + ATP = O-phospho-L-threonyl-[protein] + ADP + H(+). Serine/threonine protein kinase which activates checkpoint signaling upon genotoxic stresses such as ionizing radiation (IR), ultraviolet light (UV), or DNA replication stalling, thereby acting as a DNA damage sensor. Recognizes the substrate consensus sequence [ST]-Q. Phosphorylates histone H2A to form H2AS128ph (gamma-H2A) at sites of DNA damage, involved in the regulation of DNA damage response mechanism. Required for the control of telomere length and genome stability. The polypeptide is Serine/threonine-protein kinase tel1 (mus-21) (Neurospora crassa (strain ATCC 24698 / 74-OR23-1A / CBS 708.71 / DSM 1257 / FGSC 987)).